The primary structure comprises 129 residues: Small ribosomal subunit protein uS8 (129 aa).

The protein belongs to the universal ribosomal protein uS8 family. Part of the 30S ribosomal subunit.

In terms of biological role, one of the primary rRNA binding proteins, it binds directly to 16S rRNA central domain where it helps coordinate assembly of the platform of the 30S subunit. The chain is Small ribosomal subunit protein uS8 from Thermofilum pendens (strain DSM 2475 / Hrk 5).